Here is a 312-residue protein sequence, read N- to C-terminus: MRKHTAITTFILLGLTEDPQLQVLLFMFLFITYMLSVTGKLTIIALTMLDPHLKTPMYFFLQNLSFLEISFTATCVPRFLYSISTGNKIITYNACVIQLFFADLFGVTEFFLLATMSYDRYVAICKPLHYMAIMSNKVCKTMVICCWMAALMIILPPLSLGFHLEFCDSNVINHFGCDALPILKIPCSDTSLIEQMVVASAVLTFIITLVCVVLSYTYIIRTILKFPSVQQKKKAFSTCSSHITVVSITYGSCIFIYIKPSAKEEVNINKGVSVLISSISPMLNSFIYTLRNEQVKQAFHDSLKKIAFRLKK.

The Extracellular segment spans residues Met-1–Val-23. A helical transmembrane segment spans residues Leu-24–Ile-44. At Ala-45 to Thr-55 the chain is on the cytoplasmic side. A helical transmembrane segment spans residues Pro-56 to Val-76. At Pro-77–Cys-95 the chain is on the extracellular side. Cys-95 and Cys-177 are oxidised to a cystine. Residues Val-96–Met-116 form a helical membrane-spanning segment. Topologically, residues Ser-117–Val-143 are cytoplasmic. A helical transmembrane segment spans residues Ile-144–Leu-164. Topologically, residues Glu-165–Val-197 are extracellular. The helical transmembrane segment at Val-198–Tyr-218 threads the bilayer. At Ile-219–Cys-239 the chain is on the cytoplasmic side. Residues Ser-240–Pro-260 traverse the membrane as a helical segment. Topologically, residues Ser-261–Gly-271 are extracellular. The chain crosses the membrane as a helical span at residues Val-272–Asn-292. Residues Glu-293–Lys-312 are Cytoplasmic-facing.

Belongs to the G-protein coupled receptor 1 family.

It is found in the cell membrane. In terms of biological role, odorant receptor. In Homo sapiens (Human), this protein is Olfactory receptor 6C68 (OR6C68).